Reading from the N-terminus, the 168-residue chain is Disulfide bond formation protein B 1 (168 aa).

At 1 to 14 (MNELTSRLNRERRF) the chain is on the cytoplasmic side. A helical membrane pass occupies residues 15 to 31 (LVLLGVICLALIGGALY). The Periplasmic segment spans residues 32–49 (MQVVLGEAPCPLCILQRY). Residues C41 and C44 are joined by a disulfide bond. A helical membrane pass occupies residues 50 to 65 (ALLFIAIFAFIAAAMP). Over 66-72 (GRKSLTF) the chain is Cytoplasmic. Residues 73 to 89 (FEVLVVLSAIGGIVAAG) form a helical membrane-spanning segment. Residues 90 to 144 (NHVYILANPMVSCGIDTLQPIVDDLPLAKLWPLAFQVDGFCSTPYPPILGLSLAQ) are Periplasmic-facing. Residues C102 and C130 are joined by a disulfide bond. The helical transmembrane segment at 145 to 163 (WALVAFVLTTVLVPLGIYR) threads the bilayer. Residues 164–168 (NRRRG) lie on the Cytoplasmic side of the membrane.

Belongs to the DsbB family.

The protein localises to the cell inner membrane. Its function is as follows. Required for disulfide bond formation in some periplasmic proteins. Acts by oxidizing the DsbA protein. This is Disulfide bond formation protein B 1 from Pseudomonas entomophila (strain L48).